Consider the following 129-residue polypeptide: Mitochondrial pyruvate carrier 2 (129 aa).

Residues 2–22 (STSSVRFAFRRFWQSETGPKT) are Mitochondrial matrix-facing. Residues 23–39 (VHFWAPTLKWGLVFAGF) form a helical membrane-spanning segment. At 40–54 (SDMKRPVEKISGAQN) the chain is on the mitochondrial intermembrane side. Residues 55-71 (LSLLSTALIWTRWSFVI) form a helical membrane-spanning segment. At 72 to 74 (KPR) the chain is on the mitochondrial matrix side. The chain crosses the membrane as a helical span at residues 75–91 (NILLASVNSFLCLTAGY). Over 92–129 (QLGRIANYRIRNGDSISQLCSYILSGADESKKEITTGR) the chain is Mitochondrial intermembrane.

Belongs to the mitochondrial pyruvate carrier (MPC) (TC 2.A.105) family. As to quaternary structure, the functional 150 kDa pyruvate import complex is a heteromer of MPC1 and either MPC2 or MPC3.

It localises to the mitochondrion. The protein localises to the mitochondrion inner membrane. The catalysed reaction is pyruvate(out) + H(+)(out) = pyruvate(in) + H(+)(in). In terms of biological role, mediates the uptake of pyruvate into mitochondria. This is Mitochondrial pyruvate carrier 2 from Saccharomyces cerevisiae (strain ATCC 204508 / S288c) (Baker's yeast).